Consider the following 668-residue polypeptide: SH2 domain-containing protein B (668 aa).

The segment at 373–411 (SVSGSEESYQQCNSHPQTSRQFENGNGMRLHEEDNSSID) is disordered. The span at 374–396 (VSGSEESYQQCNSHPQTSRQFEN) shows a compositional bias: polar residues. Residues 574-642 (WIEGFITKEE…DNICESSERY (69 aa)) enclose the SH2 domain.

In terms of processing, phosphorylated on tyrosine residues. In terms of tissue distribution, expressed in roots, leaves, stems and flowers.

The chain is SH2 domain-containing protein B from Arabidopsis thaliana (Mouse-ear cress).